The chain runs to 360 residues: Tubulin-like protein CetZ2 (360 aa).

GTP is bound by residues 10-14 (QAGGK), 65-66 (GG), 106-108 (GSG), Glu-138, Asn-165, and Asn-183. The span at 334–354 (EAIDKAETEPREDPKGMWHSD) shows a compositional bias: basic and acidic residues. The tract at residues 334-360 (EAIDKAETEPREDPKGMWHSDDLDDLL) is disordered.

The protein belongs to the CetZ family.

It localises to the cytoplasm. Its function is as follows. Involved in cell shape control. This chain is Tubulin-like protein CetZ2, found in Haloferax volcanii (strain ATCC 29605 / DSM 3757 / JCM 8879 / NBRC 14742 / NCIMB 2012 / VKM B-1768 / DS2) (Halobacterium volcanii).